A 498-amino-acid chain; its full sequence is Type VI secretion system sheath protein TssC1 (498 aa).

In terms of assembly, forms a heterodimer with TssB1. Heterodimers assemble to form the sheath of the T6SS machinery. Interacts with TssA1.

Core component of the H1 type VI (H1-T6SS) secretion system that plays a role in the release of toxins targeting both eukaryotic and prokaryotic species. Forms the sheath of the structure by assembling into tubules together with TssB1 resulting in the stacking of cogwheel-like structures showing predominantly a 12-fold symmetry. The sheath contracts to provide the energy needed for effector delivery. In Pseudomonas aeruginosa (strain ATCC 15692 / DSM 22644 / CIP 104116 / JCM 14847 / LMG 12228 / 1C / PRS 101 / PAO1), this protein is Type VI secretion system sheath protein TssC1.